Here is a 393-residue protein sequence, read N- to C-terminus: Proteasome-activating nucleotidase (393 aa).

A coiled-coil region spans residues 14–53 (SDEVQLVRLLEEKIKSLQIEIENLRKELNYYKAEMEKMLS). ATP-binding positions include 178–183 (GTGKTM) and Tyr317. Residues 391-393 (KYS) form a docks into pockets in the proteasome alpha-ring to cause gate opening region.

The protein belongs to the AAA ATPase family. In terms of assembly, homohexamer. The hexameric complex has a two-ring architecture resembling a top hat that caps the 20S proteasome core at one or both ends. Upon ATP-binding, the C-terminus of PAN interacts with the alpha-rings of the proteasome core by binding to the intersubunit pockets.

It localises to the cytoplasm. Its function is as follows. ATPase which is responsible for recognizing, binding, unfolding and translocation of substrate proteins into the archaeal 20S proteasome core particle. Is essential for opening the gate of the 20S proteasome via an interaction with its C-terminus, thereby allowing substrate entry and access to the site of proteolysis. Thus, the C-termini of the proteasomal ATPase function like a 'key in a lock' to induce gate opening and therefore regulate proteolysis. Unfolding activity requires energy from ATP hydrolysis, whereas ATP binding alone promotes ATPase-20S proteasome association which triggers gate opening, and supports translocation of unfolded substrates. This is Proteasome-activating nucleotidase from Saccharolobus islandicus (strain M.16.27) (Sulfolobus islandicus).